The sequence spans 143 residues: MMINAKKLMKMAKKWQQRAALHRKRISFQRSNVFTSSSSTVEKGCFVVYTADKIRFAFPISYLSNSIVQELLKISEEEFGLPTEGPITLPFDSVFLEYLIKLIQRRMDGDTEKALLMSISSAKCSLQCSLLQQEQSTQQLLVL.

It belongs to the ARG7 family.

The protein localises to the cell membrane. May promote auxin-stimulated organ elongation, such as hypocotyls, stamen filaments and petals. The polypeptide is Auxin-responsive protein SAUR67 (Arabidopsis thaliana (Mouse-ear cress)).